Consider the following 304-residue polypeptide: Hairy/enhancer-of-split related with YRPW motif protein 1 (304 aa).

The tract at residues 1–52 (MKRAHPEYSSSDSELDETIEVEKESADENGNLSSALGSMSPTTSSQILARKR) is disordered. The span at 28 to 47 (ENGNLSSALGSMSPTTSSQI) shows a compositional bias: polar residues. The interval 48–117 (LARKRRRGII…GGKGYFDAHA (70 aa)) is transcriptional repression and interaction with NCOR1 and SIN3A. Residues 49–104 (ARKRRRGIIEKRRRDRINNSLSELRRLVPSAFEKQGSAKLEKAEILQMTVDHLKML) form the bHLH domain. The region spanning 122 to 158 (YRSLGFRECLAEVARYLSIIEGLDASDPLRVRLVSHL) is the Orange domain. The interval 196–234 (LPQNGHGNAGTTASPTEPHHQGRLGSAHPEAPALRAPPS) is disordered. Residues 200–210 (GHGNAGTTASP) show a composition bias toward polar residues. The YRPW motif signature appears at 294-297 (YRPW).

The protein belongs to the HEY family. As to quaternary structure, self-associates. Interacts with HES1 and HEYL. Interacts with HDAC1, NCOR1 and SIN3A. Interacts with GATA4 and GATA6. Interacts with CCDC89/BOIP. In terms of tissue distribution, expressed in the somitic mesoderm, the central nervous system, the kidney, the heart, nasal epithelium, and limbs.

The protein resides in the nucleus. Its function is as follows. Transcriptional repressor which binds preferentially to the canonical E box sequence 5'-CACGTG-3'. Downstream effector of Notch signaling required for cardiovascular development. Specifically required for the Notch-induced endocardial epithelial to mesenchymal transition, which is itself criticial for cardiac valve and septum development. May be required in conjunction with HEY2 to specify arterial cell fate or identity. Promotes maintenance of neuronal precursor cells and glial versus neuronal fate specification. Represses transcription by the cardiac transcriptional activators GATA4 and GATA6 and by the neuronal bHLH factors ASCL1/MASH1 and NEUROD4/MATH3. Involved in the regulation of liver cancer cells self-renewal. This chain is Hairy/enhancer-of-split related with YRPW motif protein 1 (HEY1), found in Homo sapiens (Human).